The chain runs to 20 residues: Unknown protein from 2D-PAGE (20 aa).

This chain is Unknown protein from 2D-PAGE, found in Nicotiana tabacum (Common tobacco).